Consider the following 154-residue polypeptide: Myoglobin (154 aa).

Positions 2-148 (GLSDGEWQLV…FRHDMAAKYK (147 aa)) constitute a Globin domain. Ser-4 bears the Phosphoserine mark. His-65 contacts nitrite. His-65 lines the O2 pocket. Thr-68 carries the phosphothreonine modification. His-94 provides a ligand contact to heme b.

The protein belongs to the globin family. In terms of assembly, monomeric.

The protein resides in the cytoplasm. The protein localises to the sarcoplasm. It catalyses the reaction Fe(III)-heme b-[protein] + nitric oxide + H2O = Fe(II)-heme b-[protein] + nitrite + 2 H(+). The catalysed reaction is H2O2 + AH2 = A + 2 H2O. Its function is as follows. Monomeric heme protein which primary function is to store oxygen and facilitate its diffusion within muscle tissues. Reversibly binds oxygen through a pentacoordinated heme iron and enables its timely and efficient release as needed during periods of heightened demand. Depending on the oxidative conditions of tissues and cells, and in addition to its ability to bind oxygen, it also has a nitrite reductase activity whereby it regulates the production of bioactive nitric oxide. Under stress conditions, like hypoxia and anoxia, it also protects cells against reactive oxygen species thanks to its pseudoperoxidase activity. This is Myoglobin (MB) from Osphranter rufus (Red kangaroo).